The following is a 286-amino-acid chain: Phosphate import ATP-binding protein PstB (286 aa).

The segment at 1-27 is disordered; sequence MEPKETLRQRWPGRGRTEETGAMKKSD. The span at 15-27 shows a compositional bias: basic and acidic residues; the sequence is GRTEETGAMKKSD. Residues 33–281 enclose the ABC transporter domain; it reads MTVEHLNMYY…PDRKETEDYV (249 aa). 65-72 lines the ATP pocket; the sequence is GPSGCGKS.

Belongs to the ABC transporter superfamily. Phosphate importer (TC 3.A.1.7) family. As to quaternary structure, the complex is composed of two ATP-binding proteins (PstB), two transmembrane proteins (PstC and PstA) and a solute-binding protein (PstS).

It is found in the cell membrane. The enzyme catalyses phosphate(out) + ATP + H2O = ADP + 2 phosphate(in) + H(+). In terms of biological role, part of the ABC transporter complex PstSACB involved in phosphate import. Responsible for energy coupling to the transport system. The protein is Phosphate import ATP-binding protein PstB of Rubrobacter xylanophilus (strain DSM 9941 / JCM 11954 / NBRC 16129 / PRD-1).